The following is a 236-amino-acid chain: 5'-methylthioadenosine/S-adenosylhomocysteine nucleosidase (236 aa).

The active-site Proton acceptor is the Glu-12. Substrate contacts are provided by residues Gly-78, Ile-153, and 174 to 175 (ME). The active-site Proton donor is Asp-198.

The protein belongs to the PNP/UDP phosphorylase family. MtnN subfamily.

It carries out the reaction S-adenosyl-L-homocysteine + H2O = S-(5-deoxy-D-ribos-5-yl)-L-homocysteine + adenine. The catalysed reaction is S-methyl-5'-thioadenosine + H2O = 5-(methylsulfanyl)-D-ribose + adenine. The enzyme catalyses 5'-deoxyadenosine + H2O = 5-deoxy-D-ribose + adenine. It functions in the pathway amino-acid biosynthesis; L-methionine biosynthesis via salvage pathway; S-methyl-5-thio-alpha-D-ribose 1-phosphate from S-methyl-5'-thioadenosine (hydrolase route): step 1/2. Functionally, catalyzes the irreversible cleavage of the glycosidic bond in both 5'-methylthioadenosine (MTA) and S-adenosylhomocysteine (SAH/AdoHcy) to adenine and the corresponding thioribose, 5'-methylthioribose and S-ribosylhomocysteine, respectively. Also cleaves 5'-deoxyadenosine, a toxic by-product of radical S-adenosylmethionine (SAM) enzymes, into 5-deoxyribose and adenine. The sequence is that of 5'-methylthioadenosine/S-adenosylhomocysteine nucleosidase from Shewanella oneidensis (strain ATCC 700550 / JCM 31522 / CIP 106686 / LMG 19005 / NCIMB 14063 / MR-1).